A 149-amino-acid chain; its full sequence is UPF0178 protein SERP0336 (149 aa).

This sequence belongs to the UPF0178 family.

This chain is UPF0178 protein SERP0336, found in Staphylococcus epidermidis (strain ATCC 35984 / DSM 28319 / BCRC 17069 / CCUG 31568 / BM 3577 / RP62A).